The primary structure comprises 1147 residues: Nitric oxide synthase, inducible (1147 aa).

The disordered stretch occupies residues 22-51 (KDINNNVEKTPGAIPSPTTQDDPKSHKHQN). Residues 23–27 (DINNN) carry the DINNN-motif; mediates interaction with SPSB1, SPSB2 and SPSB4 motif. The Zn(2+) site is built by Cys107 and Cys112. Ser115 serves as a coordination point for (6R)-L-erythro-5,6,7,8-tetrahydrobiopterin. Cys197 is a heme b binding site. L-arginine-binding residues include Gln260, Trp369, Tyr370, and Glu374. Positions 378, 459, 460, and 473 each coordinate (6R)-L-erythro-5,6,7,8-tetrahydrobiopterin. Tyr488 provides a ligand contact to heme b. The interval 512 to 532 (FTVLVKAVFFASVLMRKVMAS) is calmodulin-binding. The Flavodoxin-like domain occupies 536–674 (ATVLFATETG…AFRSWAVQTF (139 aa)). FMN is bound by residues Thr542, Glu543, Thr544, Lys546, and Ser547. Position 564 is a phosphothreonine (Thr564). The residue at position 572 (Tyr572) is a Phosphotyrosine. Residues Ser588, Thr589, Ser625, Cys632, Glu658, and Gln662 each contribute to the FMN site. One can recognise an FAD-binding FR-type domain in the interval 727–967 (KNVFTMRLKS…VRSVSGFQLP (241 aa)). An NADP(+)-binding site is contributed by Arg747. Residues His769, Arg903, Tyr905, Ser906, Thr921, and Ala923 each coordinate FAD. Residue Thr926 participates in NADP(+) binding. FAD-binding residues include Tyr927, Val940, Cys941, and Ser942. NADP(+) contacts are provided by Thr981, Arg1014, Ser1043, Arg1044, Lys1050, Tyr1052, Gln1054, and Asp1087.

It belongs to the NOS family. Homodimer. Interacts with NHERF1. Interacts with GAPDH; induced by oxidatively-modified low-densitity lipoprotein (LDL(ox)). Interacts with S100A8 and S100A9 to form the iNOS-S100A8/9 transnitrosylase complex. Interacts with SPSB1, SPSB2 and SPSB4. Interacts with ELOC and CUL5 in the presence of SPSB1 or SPSB2 or SPSB4. Forms a complex with ASL, ASS1 and HSP90AA1; the complex regulates cell-autonomous L-arginine synthesis and citrulline recycling while channeling extracellular L-arginine to nitric oxide synthesis pathway. Heme b is required as a cofactor. The cofactor is FAD. FMN serves as cofactor. It depends on (6R)-L-erythro-5,6,7,8-tetrahydrobiopterin as a cofactor. Post-translationally, polyubiquitinated; mediated by SPSB1, SPSB2 and SPSB4, leading to proteasomal degradation. In terms of tissue distribution, in normal kidney, expressed primarily in the medullary thick ascending limb, with minor amounts in the medullary collecting duct and vasa recta bundle.

The protein localises to the cytoplasm. The protein resides in the cytosol. It catalyses the reaction 2 L-arginine + 3 NADPH + 4 O2 + H(+) = 2 L-citrulline + 2 nitric oxide + 3 NADP(+) + 4 H2O. Not stimulated by calcium/calmodulin. Aspirin inhibits expression and function of this enzyme and effects may be exerted at the level of translational/post-translational modification and directly on the catalytic activity. Produces nitric oxide (NO) which is a messenger molecule with diverse functions throughout the body. In macrophages, NO mediates tumoricidal and bactericidal actions. Also has nitrosylase activity and mediates cysteine S-nitrosylation of cytoplasmic target proteins such PTGS2/COX2. As component of the iNOS-S100A8/9 transnitrosylase complex involved in the selective inflammatory stimulus-dependent S-nitrosylation of GAPDH implicated in regulation of the GAIT complex activity and probably multiple targets including ANXA5, EZR, MSN and VIM. Involved in inflammation, enhances the synthesis of pro-inflammatory mediators such as IL6 and IL8. This chain is Nitric oxide synthase, inducible (Nos2), found in Rattus norvegicus (Rat).